A 235-amino-acid chain; its full sequence is Adenosine 5'-phosphosulfate reductase (235 aa).

The [4Fe-4S] cluster site is built by cysteine 121, cysteine 122, cysteine 204, and cysteine 207. Residue cysteine 230 is the Nucleophile; cysteine thiosulfonate intermediate of the active site.

The protein belongs to the PAPS reductase family. CysH subfamily. Requires [4Fe-4S] cluster as cofactor.

Its subcellular location is the cytoplasm. The catalysed reaction is [thioredoxin]-disulfide + sulfite + AMP + 2 H(+) = adenosine 5'-phosphosulfate + [thioredoxin]-dithiol. It functions in the pathway sulfur metabolism; hydrogen sulfide biosynthesis; sulfite from sulfate. Functionally, catalyzes the formation of sulfite from adenosine 5'-phosphosulfate (APS) using thioredoxin as an electron donor. This is Adenosine 5'-phosphosulfate reductase from Anoxybacillus flavithermus (strain DSM 21510 / WK1).